The chain runs to 120 residues: uncharacterized protein (120 aa).

The protein resides in the cytoplasm. It localises to the nucleus. This is an uncharacterized protein from Schizosaccharomyces pombe (strain 972 / ATCC 24843) (Fission yeast).